The following is a 76-amino-acid chain: uncharacterized protein (76 aa).

The helical transmembrane segment at 40–60 threads the bilayer; the sequence is IVLNLVVLVGVVPLTWMFLGQ.

Its subcellular location is the membrane. This is an uncharacterized protein from Dictyostelium discoideum (Social amoeba).